The primary structure comprises 839 residues: Taste receptor type 1 member 2 (839 aa).

A signal peptide spans 1–19 (MRPRATTICSLFFLLRVLA). Over 20–566 (EPAKNSDFYL…AFLEWHEAPT (547 aa)) the chain is Extracellular. 9 N-linked (GlcNAc...) asparagine glycosylation sites follow: Asn84, Asn127, Asn248, Asn292, Asn312, Asn368, Asn428, Asn487, and Asn527. A helical membrane pass occupies residues 567–587 (IVVALLAALGFLSTLAILVIF). At 588-602 (WRHFQTPMVRSAGGP) the chain is on the cytoplasmic side. Residues 603–623 (MCFLMLTLLLVAYMVVPVYVG) traverse the membrane as a helical segment. Topologically, residues 624–635 (PPKVSTCFCRQA) are extracellular. The helical transmembrane segment at 636-656 (LFPLCFTICISCIAVRSFQIV) threads the bilayer. Residues 657-681 (CVFKMASRFPRAYSYWVRYQGPYVS) lie on the Cytoplasmic side of the membrane. A helical membrane pass occupies residues 682-702 (MAFITVLKMVTVVIGMLATGL). Residues 703-727 (NPTTRIDPDDPKIMIVSCNPNYRNS) lie on the Extracellular side of the membrane. Residues 728–748 (LFFNTGLDLLLSVVGFSFAYM) traverse the membrane as a helical segment. Topologically, residues 749-760 (GKELPTNYNEAK) are cytoplasmic. Residues 761-781 (FITLSMTFYFTSSVSLCTFMS) form a helical membrane-spanning segment. The Extracellular segment spans residues 782 to 784 (AYN). Residues 785–805 (GVLVTIMDLLVTVLNLLAISL) traverse the membrane as a helical segment. Residues 806–839 (GYFGPKCYMILFYPERNTPAYFNSMIQGYTMRRD) lie on the Cytoplasmic side of the membrane.

The protein belongs to the G-protein coupled receptor 3 family. TAS1R subfamily. Forms heterodimers with TAS1R3.

Its subcellular location is the cell membrane. In terms of biological role, putative taste receptor. TAS1R2/TAS1R3 recognizes diverse natural and synthetic sweeteners. The sequence is that of Taste receptor type 1 member 2 (TAS1R2) from Macaca mulatta (Rhesus macaque).